The primary structure comprises 875 residues: Probable serine/threonine-protein kinase samkC (875 aa).

Polar residues predominate over residues 1-12 (METTTITSILDD). Residues 1–47 (METTTITSILDDNNNNNNNNNNNNNNNNNNNNNNNNNNNNNNNNNYN) are disordered. Residues 13–45 (NNNNNNNNNNNNNNNNNNNNNNNNNNNNNNNNN) are compositionally biased toward low complexity. Positions 51–116 (WDNEMVCKWL…SEFDDLKNIF (66 aa)) constitute an SAM domain. Residues 135–162 (DNNNLNNLNNNNNNNNNNNNNNNNNNNN) adopt a coiled-coil conformation. The segment covering 136 to 168 (NNNLNNLNNNNNNNNNNNNNNNNNNNNNNNNNN) has biased composition (low complexity). The tract at residues 136-170 (NNNLNNLNNNNNNNNNNNNNNNNNNNNNNNNNNKT) is disordered. One can recognise a Protein kinase domain in the interval 181–452 (YVFIKQMKGS…SKQLLNFSWF (272 aa)). ATP contacts are provided by residues 187 to 195 (MKGSVNCSL) and K210. The Proton acceptor role is filled by D301. Disordered stretches follow at residues 331-362 (NNNDDDNYDNHNHNHNHNHNHNHDNDNDNDTN) and 461-718 (SEPQ…NNNN). Residues 474–554 (PQTSQSKPKP…KPKPSSSLSS (81 aa)) show a composition bias toward low complexity. Over residues 555 to 564 (EPPPLEPQPK) the composition is skewed to pro residues. Composition is skewed to low complexity over residues 565–581 (PQTSQSKPKPSSSLSSS), 589–611 (QPTQSSKPQPSQSKPQPIQSQPT), and 617–653 (QPKSSKQQPQSKQQQQQQQQQQQQQQQQQQQQQQQQK). Residues 626–655 (QSKQQQQQQQQQQQQQQQQQQQQQQQQKSK) are a coiled coil. Basic and acidic residues predominate over residues 654 to 663 (SKPEQSKSKP). Positions 664 to 718 (EQSQSKPQPGQPLQSPSKPQPIPSTTKTTTTTTTTTTPNNNNNNNNNNNNNNNNN) are enriched in low complexity. A helical transmembrane segment spans residues 842–862 (TLILYTFYYFLSNTLIYQIIL).

The protein belongs to the protein kinase superfamily. Ser/Thr protein kinase family.

It is found in the membrane. It carries out the reaction L-seryl-[protein] + ATP = O-phospho-L-seryl-[protein] + ADP + H(+). It catalyses the reaction L-threonyl-[protein] + ATP = O-phospho-L-threonyl-[protein] + ADP + H(+). The polypeptide is Probable serine/threonine-protein kinase samkC (samkC) (Dictyostelium discoideum (Social amoeba)).